We begin with the raw amino-acid sequence, 628 residues long: tRNA uridine 5-carboxymethylaminomethyl modification enzyme MnmG (628 aa).

13–18 is a binding site for FAD; sequence GAGHAG. Position 281–295 (281–295) interacts with NAD(+); that stretch reads GARYCPSIEDKIKKF.

The protein belongs to the MnmG family. As to quaternary structure, homodimer. Heterotetramer of two MnmE and two MnmG subunits. FAD is required as a cofactor.

Its subcellular location is the cytoplasm. Its function is as follows. NAD-binding protein involved in the addition of a carboxymethylaminomethyl (cmnm) group at the wobble position (U34) of certain tRNAs, forming tRNA-cmnm(5)s(2)U34. This Treponema denticola (strain ATCC 35405 / DSM 14222 / CIP 103919 / JCM 8153 / KCTC 15104) protein is tRNA uridine 5-carboxymethylaminomethyl modification enzyme MnmG.